The chain runs to 295 residues: Glycine N-acyltransferase-like protein Keg1 (295 aa).

The residue at position 41 (Lys41) is an N6-acetyllysine; alternate. The residue at position 41 (Lys41) is an N6-succinyllysine; alternate. Lys43 bears the N6-acetyllysine mark. Position 48 is an N6-acetyllysine; alternate (Lys48). Lys48 is modified (N6-succinyllysine; alternate). 2 positions are modified to N6-acetyllysine: Lys80 and Lys83. Residues Lys124, Lys128, and Lys140 each carry the N6-acetyllysine; alternate modification. Residues Lys124, Lys128, and Lys140 each carry the N6-succinyllysine; alternate modification. N6-acetyllysine is present on Lys150. Lys255 carries the post-translational modification N6-acetyllysine; alternate. Lys255 carries the N6-succinyllysine; alternate modification.

The protein belongs to the glycine N-acyltransferase family. As to quaternary structure, binds to microtubules.

Its subcellular location is the cytoplasm. The protein resides in the cytoskeleton. It localises to the microtubule organizing center. It is found in the centrosome. It carries out the reaction an acyl-CoA + glycine = an N-acylglycine + CoA + H(+). In terms of biological role, acyltransferase which transfers the acyl group to the N-terminus of glycine. Can conjugate a multitude of substrates to form a variety of N-acylglycines. In Mus musculus (Mouse), this protein is Glycine N-acyltransferase-like protein Keg1 (Keg1).